A 999-amino-acid chain; its full sequence is Hypoxia up-regulated protein 1 (999 aa).

The signal sequence occupies residues 1-32 (MAATVRRQRPRRLLCWALVAVLLADLLALSDT). N155, N222, and N515 each carry an N-linked (GlcNAc...) asparagine glycan. The disordered stretch occupies residues 564-694 (VEDSPEEEST…KKQKPARKQK (131 aa)). S567 carries the phosphoserine modification. A compositionally biased stretch (polar residues) spans 574–583 (LTKLGNTISS). N596 carries an N-linked (GlcNAc...) asparagine glycan. Composition is skewed to basic and acidic residues over residues 611 to 626 (GSKD…KEEA) and 641 to 668 (PKGD…KPNE). N830, N862, and N869 each carry an N-linked (GlcNAc...) asparagine glycan. Position 883 is an N6-acetyllysine (K883). The disordered stretch occupies residues 909 to 999 (AKFTKPRPRP…QKRPLKNDEL (91 aa)). N-linked (GlcNAc...) asparagine glycans are attached at residues N922 and N931. The span at 949-962 (EEAKAILEPDKEGL) shows a compositional bias: basic and acidic residues. The Prevents secretion from ER motif lies at 996 to 999 (NDEL).

The protein belongs to the heat shock protein 70 family. As to quaternary structure, part of a large chaperone multiprotein complex comprising DNAJB11, HSP90B1, HSPA5, HYOU, PDIA2, PDIA4, PDIA6, PPIB, SDF2L1, UGGT1 and very small amounts of ERP29, but not, or at very low levels, CALR nor CANX. Selectively expressed by cultured astrocytes but not endothelial cells, microglia or neurons.

It is found in the endoplasmic reticulum lumen. In terms of biological role, has a pivotal role in cytoprotective cellular mechanisms triggered by oxygen deprivation. Promotes HSPA5/BiP-mediated ATP nucleotide exchange and thereby activates the unfolded protein response (UPR) pathway in the presence of endoplasmic reticulum stress. May play a role as a molecular chaperone and participate in protein folding. This Rattus norvegicus (Rat) protein is Hypoxia up-regulated protein 1 (Hyou1).